The sequence spans 443 residues: ATP-dependent protease ATPase subunit HslU (443 aa).

Residues V18, 60 to 65 (GVGKTE), D256, E321, and R393 contribute to the ATP site.

It belongs to the ClpX chaperone family. HslU subfamily. In terms of assembly, a double ring-shaped homohexamer of HslV is capped on each side by a ring-shaped HslU homohexamer. The assembly of the HslU/HslV complex is dependent on binding of ATP.

It localises to the cytoplasm. In terms of biological role, ATPase subunit of a proteasome-like degradation complex; this subunit has chaperone activity. The binding of ATP and its subsequent hydrolysis by HslU are essential for unfolding of protein substrates subsequently hydrolyzed by HslV. HslU recognizes the N-terminal part of its protein substrates and unfolds these before they are guided to HslV for hydrolysis. This is ATP-dependent protease ATPase subunit HslU from Azoarcus sp. (strain BH72).